The following is a 206-amino-acid chain: Protein Nef (206 aa).

The N-myristoyl glycine; by host moiety is linked to residue Gly-2. Phosphoserine; by host is present on Ser-6. Residues 62–65 (QNEE) form an acidic; interacts with host PACS1 and PACS2; stabilizes the interaction of NEF/MHC-I with host AP1M1; necessary for MHC-I internalization region. Positions 69-78 (PVRPQVPLRP) are SH3-binding; interaction with Src family tyrosine kinases. The PxxP; stabilizes the interaction of NEF/MHC-I with host AP1M1; necessary for MHC-I internalization signature appears at 72-75 (PQVP). The mediates dimerization, Nef-PTE1 interaction stretch occupies residues 108–124 (EILDLWVYHTQGFFPDW). The interval 148–180 (LEPEEVERANEGDNNILLHPICQHGQEDEAREV) is binding to ATP6V1H. The Dileucine internalization motif; necessary for CD4 internalization signature appears at 164 to 165 (LL). The Diacidic; necessary for CD4 internalization motif lies at 174–175 (ED).

The protein belongs to the lentivirus primate group Nef protein family. In terms of assembly, monomer; cytosolic form. Homodimer; membrane bound form. Interacts with Nef associated p21-activated kinase (PAK2); this interaction activates PAK2. Associates with the Nef-MHC-I-AP1 complex; this complex is required for MHC-I internalization. Interacts (via C-terminus) with host PI3-kinase. Interacts with host PACS1; this interaction seems to be weak. Interacts with host PACS2. Interacts with host LCK and MAPK3; these interactions inhibit the kinase activity of the latter. Interacts with host ATP6V1H; this interaction may play a role in CD4 endocytosis. Associates with the CD4-Nef-AP2 complex; this complex is required for CD4 internalization. Interacts with host AP2 subunit alpha and AP2 subunit sigma2. Interacts with TCR-zeta chain; this interaction up-regulates the Fas ligand (FasL) surface expression. Interacts with host HCK, LYN, and SRC; these interactions activate the Src family kinases. Interacts with MAP3K5; this interaction inhibits the Fas and TNFR-mediated death signals. Interacts with beta-COP and PTE1. Interacts with human RACK1; this increases Nef phosphorylation by PKC. Interacts with TP53; this interaction decreases the half-life of TP53, protecting the infected cell against p53-mediated apoptosis. The virion-associated Nef proteins are cleaved by the viral protease to release the soluble C-terminal core protein. Nef is probably cleaved concomitantly with viral structural proteins on maturation of virus particles. In terms of processing, myristoylated. Post-translationally, phosphorylated on serine residues, probably by host PKCdelta and theta.

The protein resides in the host cell membrane. The protein localises to the virion. It is found in the secreted. Its subcellular location is the host Golgi apparatus membrane. Factor of infectivity and pathogenicity, required for optimal virus replication. Alters numerous pathways of T-lymphocyte function and down-regulates immunity surface molecules in order to evade host defense and increase viral infectivity. Alters the functionality of other immunity cells, like dendritic cells, monocytes/macrophages and NK cells. Functionally, in infected CD4(+) T-lymphocytes, down-regulates the surface MHC-I, mature MHC-II, CD4, CD28, CCR5 and CXCR4 molecules. Mediates internalization and degradation of host CD4 through the interaction of with the cytoplasmic tail of CD4, the recruitment of AP-2 (clathrin adapter protein complex 2), internalization through clathrin coated pits, and subsequent transport to endosomes and lysosomes for degradation. Diverts host MHC-I molecules to the trans-Golgi network-associated endosomal compartments by an endocytic pathway to finally target them for degradation. MHC-I down-regulation may involve AP-1 (clathrin adapter protein complex 1) or possibly Src family kinase-ZAP70/Syk-PI3K cascade recruited by PACS2. In consequence infected cells are masked for immune recognition by cytotoxic T-lymphocytes. Decreasing the number of immune receptors also prevents reinfection by more HIV particles (superinfection). Down-regulates host SERINC3 and SERINC5 thereby excluding these proteins from the viral particles. Virion infectivity is drastically higher when SERINC3 or SERINC5 are excluded from the viral envelope, because these host antiviral proteins impair the membrane fusion event necessary for subsequent virion penetration. Its function is as follows. Bypasses host T-cell signaling by inducing a transcriptional program nearly identical to that of anti-CD3 cell activation. Interaction with TCR-zeta chain up-regulates the Fas ligand (FasL). Increasing surface FasL molecules and decreasing surface MHC-I molecules on infected CD4(+) cells send attacking cytotoxic CD8+ T-lymphocytes into apoptosis. In terms of biological role, plays a role in optimizing the host cell environment for viral replication without causing cell death by apoptosis. Protects the infected cells from apoptosis in order to keep them alive until the next virus generation is ready to strike. Inhibits the Fas and TNFR-mediated death signals by blocking MAP3K5/ASK1. Decreases the half-life of TP53, protecting the infected cell against p53-mediated apoptosis. Inhibits the apoptotic signals regulated by the Bcl-2 family proteins through the formation of a Nef/PI3-kinase/PAK2 complex that leads to activation of PAK2 and induces phosphorylation of host BAD. Extracellular Nef protein targets CD4(+) T-lymphocytes for apoptosis by interacting with CXCR4 surface receptors. The chain is Protein Nef from Simian immunodeficiency virus (isolate MB66) (SIV-cpz).